A 517-amino-acid polypeptide reads, in one-letter code: 2,3-bisphosphoglycerate-independent phosphoglycerate mutase (517 aa).

Mn(2+) is bound by residues Asp12 and Ser62. Ser62 serves as the catalytic Phosphoserine intermediate. Residues His123, 153–154, Arg185, Arg191, 261–264, and Lys336 each bind substrate; these read RD and RSDR. Positions 403, 407, 444, 445, and 463 each coordinate Mn(2+).

The protein belongs to the BPG-independent phosphoglycerate mutase family. As to quaternary structure, monomer. Mn(2+) serves as cofactor.

The catalysed reaction is (2R)-2-phosphoglycerate = (2R)-3-phosphoglycerate. It participates in carbohydrate degradation; glycolysis; pyruvate from D-glyceraldehyde 3-phosphate: step 3/5. In terms of biological role, catalyzes the interconversion of 2-phosphoglycerate and 3-phosphoglycerate. This chain is 2,3-bisphosphoglycerate-independent phosphoglycerate mutase, found in Methylobacillus flagellatus (strain ATCC 51484 / DSM 6875 / VKM B-1610 / KT).